The following is a 1005-amino-acid chain: Probable histidine kinase 4 (1005 aa).

The Cytoplasmic segment spans residues 1–37; sequence MGVGGGGGGGGGEAAAAVAVEGDEAGKGRRWWRVKVK. The helical transmembrane segment at 38-58 threads the bilayer; the sequence is LSTVAVVAWVLASAALWAGLH. Residues 59–333 are Extracellular-facing; it reads WRFRRAALHK…YRNKLHVSWS (275 aa). Residues 110 to 321 enclose the CHASE domain; the sequence is HPPALDQDTF…GDPLRKHQMV (212 aa). The chain crosses the membrane as a helical span at residues 334–354; sequence AITTPSGVFVICMLVGYIIYA. Over 355–1005 the chain is Cytoplasmic; that stretch reads AWSRYDNVKE…QKFLGPCVSS (651 aa). Residues 389 to 675 form the Histidine kinase domain; it reads TVSHEIRTPM…TFTFTAVLRR (287 aa). At His392 the chain carries Phosphohistidine; by autocatalysis. Response regulatory domains lie at 700 to 829 and 862 to 999; these read SALL…FQAL and NILV…QKFL. At Asp912 the chain carries 4-aspartylphosphate.

Activation probably requires a transfer of a phosphate group between a His in the transmitter domain and an Asp of the receiver domain. Highly expressed in young leaves and spikelets, and at lower levels in roots, mature leaves and stems.

It is found in the cell membrane. It carries out the reaction ATP + protein L-histidine = ADP + protein N-phospho-L-histidine.. Cytokinin receptor related to bacterial two-component regulators. Functions as a histidine kinase and transmits the stress signal to a downstream MAPK cascade. The chain is Probable histidine kinase 4 from Oryza sativa subsp. japonica (Rice).